The primary structure comprises 429 residues: Ribosomal RNA small subunit methyltransferase B (429 aa).

S-adenosyl-L-methionine is bound by residues C254–K260, D277, D303, and D322. C375 (nucleophile) is an active-site residue. Residues A397–D419 are disordered. Positions E400–L412 are enriched in polar residues.

The protein belongs to the class I-like SAM-binding methyltransferase superfamily. RsmB/NOP family.

It localises to the cytoplasm. It carries out the reaction cytidine(967) in 16S rRNA + S-adenosyl-L-methionine = 5-methylcytidine(967) in 16S rRNA + S-adenosyl-L-homocysteine + H(+). In terms of biological role, specifically methylates the cytosine at position 967 (m5C967) of 16S rRNA. This chain is Ribosomal RNA small subunit methyltransferase B, found in Salmonella dublin (strain CT_02021853).